Reading from the N-terminus, the 483-residue chain is ATP-dependent RNA helicase DDX25 (483 aa).

A Nuclear export signal motif is present at residues 61–74 (LAANSLLNKLIRQS). The Q motif signature appears at 97 to 125 (KTFEELRLKEELLKGIYAMGFNRPSKIQE). The Nuclear localization signal signature appears at 100–114 (EELRLKEELLKGIYA). The Helicase ATP-binding domain maps to 130–300 (MMLAHPPQNL…ERIIPDPNVI (171 aa)). 143 to 150 (SQSGTGKT) contacts ATP. A DEAD box motif is present at residues 247–250 (DEAD). One can recognise a Helicase C-terminal domain in the interval 311–478 (NIRQYYVLCG…QLDPEDMDEI (168 aa)).

It belongs to the DEAD box helicase family. Phosphorylated on threonine residues. The phosphorylated form is found in the cytoplasm but not in the nucleus.

The protein resides in the cytoplasm. The protein localises to the nucleus. The enzyme catalyses ATP + H2O = ADP + phosphate + H(+). In terms of biological role, ATP-dependent RNA helicase. Required for mRNA export and translation regulation during spermatid development. This chain is ATP-dependent RNA helicase DDX25 (DDX25), found in Bos taurus (Bovine).